A 306-amino-acid polypeptide reads, in one-letter code: Lipoyl synthase (306 aa).

The [4Fe-4S] cluster site is built by Cys55, Cys60, Cys66, Cys81, Cys85, Cys88, and Ser294. A Radical SAM core domain is found at 67–283 (WNHRTATFLL…RSYALARGFT (217 aa)).

The protein belongs to the radical SAM superfamily. Lipoyl synthase family. Requires [4Fe-4S] cluster as cofactor.

It is found in the cytoplasm. The catalysed reaction is [[Fe-S] cluster scaffold protein carrying a second [4Fe-4S](2+) cluster] + N(6)-octanoyl-L-lysyl-[protein] + 2 oxidized [2Fe-2S]-[ferredoxin] + 2 S-adenosyl-L-methionine + 4 H(+) = [[Fe-S] cluster scaffold protein] + N(6)-[(R)-dihydrolipoyl]-L-lysyl-[protein] + 4 Fe(3+) + 2 hydrogen sulfide + 2 5'-deoxyadenosine + 2 L-methionine + 2 reduced [2Fe-2S]-[ferredoxin]. It functions in the pathway protein modification; protein lipoylation via endogenous pathway; protein N(6)-(lipoyl)lysine from octanoyl-[acyl-carrier-protein]: step 2/2. Catalyzes the radical-mediated insertion of two sulfur atoms into the C-6 and C-8 positions of the octanoyl moiety bound to the lipoyl domains of lipoate-dependent enzymes, thereby converting the octanoylated domains into lipoylated derivatives. This chain is Lipoyl synthase, found in Chloroflexus aurantiacus (strain ATCC 29364 / DSM 637 / Y-400-fl).